Here is a 178-residue protein sequence, read N- to C-terminus: FMN reductase (NADH) RutF (178 aa).

This sequence belongs to the non-flavoprotein flavin reductase family. RutF subfamily.

The catalysed reaction is FMNH2 + NAD(+) = FMN + NADH + 2 H(+). Catalyzes the reduction of FMN to FMNH2 which is used to reduce pyrimidine by RutA via the Rut pathway. The sequence is that of FMN reductase (NADH) RutF from Pseudomonas syringae pv. syringae (strain B728a).